Here is a 405-residue protein sequence, read N- to C-terminus: Serine-type anaerobic sulfatase-maturating enzyme (405 aa).

The 232-residue stretch at 18-249 (PRSPVPFHIL…QWRKRCDRGR (232 aa)) folds into the Radical SAM core domain. C35 and C39 together coordinate [4Fe-4S] cluster. Y41 serves as a coordination point for S-adenosyl-L-methionine. [4Fe-4S] cluster is bound at residue C42. G84, S140, and R152 together coordinate S-adenosyl-L-methionine. [4Fe-4S] cluster contacts are provided by C270, C276, and C291. D292 functions as the Proton acceptor in the catalytic mechanism. The [4Fe-4S] cluster site is built by C331, C334, C340, C344, and C357.

Belongs to the radical SAM superfamily. Anaerobic sulfatase-maturating enzyme family. In terms of assembly, monomer. Interacts with AtsA prior to its export to the periplasm. The cofactor is [4Fe-4S] cluster.

The protein localises to the cytoplasm. The enzyme catalyses L-seryl-[sulfatase] + S-adenosyl-L-methionine = 3-oxo-L-alanyl-[sulfatase] + 5'-deoxyadenosine + L-methionine + H(+). Its pathway is protein modification; sulfatase oxidation. In terms of biological role, involved in 'Ser-type' sulfatase maturation under anaerobic conditions. Catalyzes the post-translational modification of serine ('Ser-72' in the arylsulfatase AtsA) into 3-oxoalanine (also known as C(alpha)-formylglycine (FGly)), by a free radical chemical mechanism initiated via the reductive cleavage of S-adenosyl-L-methionine (SAM). The sequence is that of Serine-type anaerobic sulfatase-maturating enzyme from Klebsiella aerogenes (Enterobacter aerogenes).